The sequence spans 336 residues: 3-isopropylmalate dehydrogenase (336 aa).

Residues R87, R97, R121, and D211 each contribute to the substrate site. 3 residues coordinate Mg(2+): D211, D235, and D239. Residue 271–283 (GSAPDIAGQGIAD) coordinates NAD(+).

Belongs to the isocitrate and isopropylmalate dehydrogenases family. LeuB type 2 subfamily. Homodimer. Mg(2+) is required as a cofactor. It depends on Mn(2+) as a cofactor.

It localises to the cytoplasm. It catalyses the reaction (2R,3S)-3-isopropylmalate + NAD(+) = 4-methyl-2-oxopentanoate + CO2 + NADH. It participates in amino-acid biosynthesis; L-leucine biosynthesis; L-leucine from 3-methyl-2-oxobutanoate: step 3/4. Functionally, catalyzes the oxidation of 3-carboxy-2-hydroxy-4-methylpentanoate (3-isopropylmalate) to 3-carboxy-4-methyl-2-oxopentanoate. The product decarboxylates to 4-methyl-2 oxopentanoate. This is 3-isopropylmalate dehydrogenase from Mycobacterium leprae (strain Br4923).